The chain runs to 276 residues: Putative hydro-lyase Xaut_1503 (276 aa).

Belongs to the D-glutamate cyclase family.

This Xanthobacter autotrophicus (strain ATCC BAA-1158 / Py2) protein is Putative hydro-lyase Xaut_1503.